The sequence spans 190 residues: Potassium-transporting ATPase KdpC subunit (190 aa).

A helical membrane pass occupies residues 10 to 30 (TFIFLLLITGGVYPLLTTALG).

This sequence belongs to the KdpC family. As to quaternary structure, the system is composed of three essential subunits: KdpA, KdpB and KdpC.

Its subcellular location is the cell inner membrane. Functionally, part of the high-affinity ATP-driven potassium transport (or Kdp) system, which catalyzes the hydrolysis of ATP coupled with the electrogenic transport of potassium into the cytoplasm. This subunit acts as a catalytic chaperone that increases the ATP-binding affinity of the ATP-hydrolyzing subunit KdpB by the formation of a transient KdpB/KdpC/ATP ternary complex. This Escherichia coli O9:H4 (strain HS) protein is Potassium-transporting ATPase KdpC subunit.